A 218-amino-acid polypeptide reads, in one-letter code: Small ribosomal subunit protein uS4 (218 aa).

In terms of domain architecture, S4 RNA-binding spans 111 to 175 (RRLQTQVLRL…SPLKNESHPE (65 aa)). A disordered region spans residues 192–218 (KAAAEAKQAREKPPERGGGRRKRGGRR). Basic and acidic residues predominate over residues 198 to 209 (KQAREKPPERGG).

The protein belongs to the universal ribosomal protein uS4 family. In terms of assembly, part of the 30S ribosomal subunit. Contacts protein S5. The interaction surface between S4 and S5 is involved in control of translational fidelity.

One of the primary rRNA binding proteins, it binds directly to 16S rRNA where it nucleates assembly of the body of the 30S subunit. In terms of biological role, with S5 and S12 plays an important role in translational accuracy. The sequence is that of Small ribosomal subunit protein uS4 from Methanosarcina acetivorans (strain ATCC 35395 / DSM 2834 / JCM 12185 / C2A).